The primary structure comprises 201 residues: E3 ubiquitin-protein ligase LAP (201 aa).

Over 1-92 (MSTIVDMVDV…RDCHDSLLVN (92 aa)) the chain is Cytoplasmic. The RING-CH-type zinc finger occupies 9-69 (DVSLVDKCCW…AICETPYNVK (61 aa)). Zn(2+) contacts are provided by C17, C20, C31, C33, H41, C44, C59, and C62. Residues 93–113 (LPLCLIVGGISTYTLVSVEII) form a helical membrane-spanning segment. Residues 114 to 123 (KLMESEETSE) are Lumenal-facing. A helical transmembrane segment spans residues 124–144 (LTKVFLVTSFLGPFIVTVLSA). At 145-201 (LRTCIDCRTYFLTTRKRNTIHTLQELEDDDDDDDDDDDDDDEEYADAVEEIIIGPSN) the chain is on the cytoplasmic side. The interval 168-188 (QELEDDDDDDDDDDDDDDEEY) is disordered. Residues 169–188 (ELEDDDDDDDDDDDDDDEEY) are compositionally biased toward acidic residues.

The protein belongs to the poxviridae LAP protein family.

It localises to the host membrane. It is found in the host Golgi apparatus. The protein localises to the host trans-Golgi network membrane. The protein resides in the host early endosome membrane. The enzyme catalyses S-ubiquitinyl-[E2 ubiquitin-conjugating enzyme]-L-cysteine + [acceptor protein]-L-lysine = [E2 ubiquitin-conjugating enzyme]-L-cysteine + N(6)-ubiquitinyl-[acceptor protein]-L-lysine.. In terms of biological role, E3 ubiquitin-protein ligase which promotes ubiquitination and subsequent degradation of host MHC-I and CD4 molecules, presumably to prevent lysis of infected cells by cytotoxic T-lymphocytes and NK cell. Binds target molecules through transmembrane interaction. The result of this ubiquitination is the enhancement of the endocytosis of the target chain and the delivery to the lysosome, where it is proteolytically destroyed. This chain is E3 ubiquitin-protein ligase LAP, found in Oryctolagus cuniculus (Rabbit).